A 362-amino-acid polypeptide reads, in one-letter code: Protein RAFTIN 1B (362 aa).

An N-terminal signal peptide occupies residues 1-20 (MARFLVALLAATLVAVQAGG). The segment at 58 to 94 (STSFVRDPEDRPPFDYRDYSRSSSDDEPSKSTVAASG) is disordered. Residues 63–86 (RDPEDRPPFDYRDYSRSSSDDEPS) are compositionally biased toward basic and acidic residues. N-linked (GlcNAc...) asparagine glycosylation occurs at Asn-102. Residues 142–356 (FFHEEAVRVG…PYGHIIWAKN (215 aa)) form the BURP domain.

Specifically expressed in anthers, in the tapetum and microspores (at protein level).

Functionally, required for pollen development. Probably synthesized in the tapetum, packaged in Ubisch bodies and transported at appropriate stages to the micropsores. The polypeptide is Protein RAFTIN 1B (RAFTIN1B) (Triticum aestivum (Wheat)).